A 205-amino-acid chain; its full sequence is Gap junction epsilon-1 protein (205 aa).

At 1 to 23 (MSLNYIKNFYEGCVKPPTVIGQF) the chain is on the cytoplasmic side. The helical transmembrane segment at 24–44 (HTLFFGSIRIFFLGVLGFAVY) threads the bilayer. The Extracellular segment spans residues 45-76 (GNEALHFICDPDKREVNLFCYNQFRPITPQVS). 2 cysteine pairs are disulfide-bonded: Cys-53–Cys-161 and Cys-64–Cys-148. The helical transmembrane segment at 77–97 (FSALQLVIVLVPGALFHLYAA) threads the bilayer. At 98-112 (CKSINQECILQKPIY) the chain is on the cytoplasmic side. The chain crosses the membrane as a helical span at residues 113–133 (TIIYILSVLLRISLAAIAFWL). The Extracellular segment spans residues 134-170 (QIYLFGFQVKSLYLCDARSLGENMIIRCMVPEHFEKT). The chain crosses the membrane as a helical span at residues 171 to 191 (IFLIAINTFTTITILLFVAEI). At 192-205 (FEIIFRRLYFPFRQ) the chain is on the cytoplasmic side.

This sequence belongs to the connexin family. Beta-type (group I) subfamily. In terms of assembly, a connexon is composed of a hexamer of connexins. In terms of tissue distribution, not detected in lens or retina.

The protein resides in the cell membrane. Mediates calcium-independent ATP release, suggesting activity as a hemichannel. Does not form functional gap junctions. In Homo sapiens (Human), this protein is Gap junction epsilon-1 protein (GJE1).